The chain runs to 282 residues: Pantothenate synthetase (282 aa).

30–37 (MGYLHEGH) contacts ATP. The active-site Proton donor is the H37. A (R)-pantoate-binding site is contributed by Q61. Residue Q61 coordinates beta-alanine. 147 to 150 (GMKD) is an ATP binding site. Q153 contributes to the (R)-pantoate binding site. ATP contacts are provided by residues V176 and 184–187 (KSSR).

This sequence belongs to the pantothenate synthetase family. Homodimer.

The protein resides in the cytoplasm. The catalysed reaction is (R)-pantoate + beta-alanine + ATP = (R)-pantothenate + AMP + diphosphate + H(+). The protein operates within cofactor biosynthesis; (R)-pantothenate biosynthesis; (R)-pantothenate from (R)-pantoate and beta-alanine: step 1/1. Functionally, catalyzes the condensation of pantoate with beta-alanine in an ATP-dependent reaction via a pantoyl-adenylate intermediate. In Bacillus cereus (strain ZK / E33L), this protein is Pantothenate synthetase.